A 344-amino-acid polypeptide reads, in one-letter code: Probable dual-specificity RNA methyltransferase RlmN (344 aa).

Glu83 acts as the Proton acceptor in catalysis. The Radical SAM core domain occupies Tyr89–Asp323. A disulfide bridge links Cys96 with Cys328. 3 residues coordinate [4Fe-4S] cluster: Cys103, Cys107, and Cys110. S-adenosyl-L-methionine contacts are provided by residues Gly153 to Glu154, Ser185, Ser209 to His211, and Asn285. The S-methylcysteine intermediate role is filled by Cys328.

Belongs to the radical SAM superfamily. RlmN family. It depends on [4Fe-4S] cluster as a cofactor.

It localises to the cytoplasm. It catalyses the reaction adenosine(2503) in 23S rRNA + 2 reduced [2Fe-2S]-[ferredoxin] + 2 S-adenosyl-L-methionine = 2-methyladenosine(2503) in 23S rRNA + 5'-deoxyadenosine + L-methionine + 2 oxidized [2Fe-2S]-[ferredoxin] + S-adenosyl-L-homocysteine. The catalysed reaction is adenosine(37) in tRNA + 2 reduced [2Fe-2S]-[ferredoxin] + 2 S-adenosyl-L-methionine = 2-methyladenosine(37) in tRNA + 5'-deoxyadenosine + L-methionine + 2 oxidized [2Fe-2S]-[ferredoxin] + S-adenosyl-L-homocysteine. Its function is as follows. Specifically methylates position 2 of adenine 2503 in 23S rRNA and position 2 of adenine 37 in tRNAs. This is Probable dual-specificity RNA methyltransferase RlmN from Deinococcus geothermalis (strain DSM 11300 / CIP 105573 / AG-3a).